A 290-amino-acid polypeptide reads, in one-letter code: Ciliary microtubule inner protein 6 (290 aa).

Residues 76–112 (ENQGDWWPHGKGLENPFQPPYDTKSTQRSDFKKPTCP) form a disordered region. Mn stretches follow at residues 128-160 (GIVPLVSPDASAELQRNFKEHISFIHQYDARKT) and 213-246 (SAESKMISPGLCRQNSQELLETKTHLSETDIRVA). The tract at residues 197–228 (SGSCSSEQSKKTEKGNSAESKMISPGLCRQNS) is disordered.

It is found in the cell projection. It localises to the cilium. This is Ciliary microtubule inner protein 6 (CIMIP6) from Bos taurus (Bovine).